The following is a 258-amino-acid chain: ADP-ribose glycohydrolase MACROD1 (258 aa).

3 positions are modified to N6-succinyllysine: K29, K36, and K62. Residue K71 forms a Glycyl lysine isopeptide (Lys-Gly) (interchain with G-Cter in SUMO2) linkage. Positions 74 to 255 (NPKYKKDKQL…IYQERLPHYF (182 aa)) constitute a Macro domain. Residue 92–94 (GDI) participates in substrate binding. At K96 the chain carries N6-acetyllysine. Residues 105–107 (AAN), 112–117 (GGGGVD), 200–206 (ISTGVFG), and F239 contribute to the substrate site.

The protein belongs to the MacroD-type family. MacroD1/2-like subfamily. As to quaternary structure, interacts with ESR1; Interacts in a manner that is estrogen independent but is enhanced by estrogen. Interacts (via macro domain) with AR.

It is found in the nucleus. It catalyses the reaction 3''-O-acetyl-ADP-D-ribose + H2O = ADP-D-ribose + acetate + H(+). The catalysed reaction is 2''-O-acetyl-ADP-D-ribose + H2O = ADP-D-ribose + acetate + H(+). It carries out the reaction 4-O-(ADP-D-ribosyl)-L-aspartyl-[protein] + H2O = L-aspartyl-[protein] + ADP-D-ribose + H(+). The enzyme catalyses 5-O-(ADP-D-ribosyl)-L-glutamyl-[protein] + H2O = L-glutamyl-[protein] + ADP-D-ribose + H(+). It catalyses the reaction alpha-NAD(+) + H2O = ADP-D-ribose + nicotinamide + H(+). With respect to regulation, subject to competitive inhibition by the product ADP-ribose. Its function is as follows. Removes ADP-ribose from aspartate and glutamate residues in proteins bearing a single ADP-ribose moiety. Inactive towards proteins bearing poly-ADP-ribose. Deacetylates O-acetyl-ADP ribose, a signaling molecule generated by the deacetylation of acetylated lysine residues in histones and other proteins. Plays a role in estrogen signaling. Binds to androgen receptor (AR) and amplifies the transactivation function of AR in response to androgen. May play an important role in carcinogenesis and/or progression of hormone-dependent cancers by feed-forward mechanism that activates ESR1 transactivation. Could be an ESR1 coactivator, providing a positive feedback regulatory loop for ESR1 signal transduction. Could be involved in invasive growth by down-regulating CDH1 in endometrial cancer cells. Enhances ESR1-mediated transcription activity. The sequence is that of ADP-ribose glycohydrolase MACROD1 (Macrod1) from Rattus norvegicus (Rat).